Here is a 91-residue protein sequence, read N- to C-terminus: Potassium channel toxin TtrKIK (91 aa).

The first 25 residues, 1 to 25 (MVATNRCCVFALLFALLLVHSLTEA), serve as a signal peptide directing secretion. Positions 26 to 44 (GKGKEVLGKIKDKLIEAKD) are excised as a propeptide. The region spanning 58 to 91 (EYACPAIEKFCEDHCAAKKAVGKCDDFKCNCIKL) is the BetaSPN-type CS-alpha/beta domain. 3 disulfide bridges follow: Cys-61-Cys-81, Cys-68-Cys-86, and Cys-72-Cys-88.

It belongs to the long chain scorpion toxin family. Class 2 subfamily. As to expression, expressed by the venom gland.

The protein resides in the secreted. The full peptide presents antibacterial and cytotoxic activities. The synthetic C-terminus (AA 33-76) inhibits voltage-gated potassium channels Kv1.1/KCNA1, Kv1.2/KCNA2, and Kv1.3/KCNA3. The protein is Potassium channel toxin TtrKIK of Tityus trivittatus (Argentinean scorpion).